Reading from the N-terminus, the 548-residue chain is Chaperonin GroEL (548 aa).

ATP contacts are provided by residues 29 to 32 (TMGP), Lys50, 86 to 90 (DGTTT), Gly414, 478 to 480 (NAA), and Asp494.

Belongs to the chaperonin (HSP60) family. In terms of assembly, forms a cylinder of 14 subunits composed of two heptameric rings stacked back-to-back. Interacts with the co-chaperonin GroES.

Its subcellular location is the cytoplasm. It carries out the reaction ATP + H2O + a folded polypeptide = ADP + phosphate + an unfolded polypeptide.. Its function is as follows. Together with its co-chaperonin GroES, plays an essential role in assisting protein folding. The GroEL-GroES system forms a nano-cage that allows encapsulation of the non-native substrate proteins and provides a physical environment optimized to promote and accelerate protein folding. In terms of biological role, may play a protective role against the defense mechanisms generated by the infected macrophages. The protein is Chaperonin GroEL of Legionella pneumophila subsp. pneumophila (strain Philadelphia 1 / ATCC 33152 / DSM 7513).